We begin with the raw amino-acid sequence, 513 residues long: Lysine--tRNA ligase (513 aa).

Positions 1–11 (MTEPTQPNAAQ) are enriched in polar residues. The segment at 1-22 (MTEPTQPNAAQPNVVPEVDDNK) is disordered. Mg(2+) contacts are provided by E423 and E430.

Belongs to the class-II aminoacyl-tRNA synthetase family. As to quaternary structure, homodimer. Requires Mg(2+) as cofactor.

Its subcellular location is the cytoplasm. The enzyme catalyses tRNA(Lys) + L-lysine + ATP = L-lysyl-tRNA(Lys) + AMP + diphosphate. This chain is Lysine--tRNA ligase, found in Paraburkholderia xenovorans (strain LB400).